Consider the following 647-residue polypeptide: Dihydrolipoyllysine-residue acetyltransferase component of pyruvate dehydrogenase complex (647 aa).

The transit peptide at 1–86 (MWRVCARRAQ…LWGSPSRRWY (86 aa)) directs the protein to the mitochondrion. Residues 91–167 (HQKVPLPSLS…PVGAIICITV (77 aa)) enclose the Lipoyl-binding 1 domain. Ser-100 is subject to Phosphoserine. The residue at position 132 (Lys-132) is an N6-lipoyllysine. Residues 184-216 (SAAPAPPAAPAPTPAAPAPSPTPSAQAPGSSYP) form a disordered region. A compositionally biased stretch (pro residues) spans 187–205 (PAPPAAPAPTPAAPAPSPT). A Lipoyl-binding 2 domain is found at 218–294 (HMQVLLPALS…PLGTPLCIIV (77 aa)). Position 259 is an N6-lipoyllysine (Lys-259). A disordered region spans residues 311-352 (VTDLKPPAPPPIPSPAAPVPPAPQPVAPPPSAPRPAAPAGPK). Pro residues predominate over residues 316–348 (PPAPPPIPSPAAPVPPAPQPVAPPPSAPRPAAP). The region spanning 356–393 (FVSPLAKKLAAEKGIDLTQVKGTGPDGRIIKKDIDSFV) is the Peripheral subunit-binding (PSBD) domain. Arg-461 provides a ligand contact to CoA. Position 466 is an N6-acetyllysine (Lys-466). Position 473 is an N6-succinyllysine (Lys-473). Position 475 (Ser-475) interacts with CoA. Lys-547 carries the N6-succinyllysine modification. CoA is bound by residues Ser-566, Asn-567, and Gly-591. Active-site residues include His-620 and Asp-624.

This sequence belongs to the 2-oxoacid dehydrogenase family. Part of the pyruvate dehydrogenase complex (PDHc) that is a multi-enzyme complex composed of multiple copies of three enzymes, pyruvate dehydrogenase (subunits PDH1A and PDHB, E1 component), dihydrolipoamide acetyltransferase (DLAT, E2 component), and dihydrolipoamide dehydrogenase (DLD, E3 component) to which is added an additional protein the E3-binding protein (PDHX, E3BP). In terms of structural architecture, the E2 and E3BP components assemble into a 60meric central core with icosahedral symmetry. The central core is decorated with E1 and E3 proteins. Currently, two alternative models for the E2:E3BP stoichiometry are considered as being either 48:12 (E2(48)-E3BP(12)) or 40:20 (E2(40)-E3BP(20)). Interacts with PDK2 and PDK3. Interacts with SIRT4. Interacts with PDHB. (R)-lipoate is required as a cofactor. Delipoylated at Lys-132 and Lys-259 by SIRT4, delipoylation decreases the PHD complex activity.

It is found in the mitochondrion matrix. It carries out the reaction N(6)-[(R)-dihydrolipoyl]-L-lysyl-[protein] + acetyl-CoA = N(6)-[(R)-S(8)-acetyldihydrolipoyl]-L-lysyl-[protein] + CoA. As part of the pyruvate dehydrogenase complex, catalyzes the transfers of an acetyl group to a lipoic acid moiety. The pyruvate dehydrogenase complex, catalyzes the overall conversion of pyruvate to acetyl-CoA and CO(2), and thereby links cytoplasmic glycolysis and the mitochondrial tricarboxylic acid (TCA) cycle. In Bos taurus (Bovine), this protein is Dihydrolipoyllysine-residue acetyltransferase component of pyruvate dehydrogenase complex.